The following is a 647-amino-acid chain: Protein cueball (647 aa).

The signal sequence occupies residues 1–22 (MLWCPSVLVPLIAVAACLPVLA). The Extracellular portion of the chain corresponds to 23 to 534 (IGTPLEWEFA…CMTPSPWTSN (512 aa)). Asn-80 and Asn-106 each carry an N-linked (GlcNAc...) asparagine glycan. LDL-receptor class B repeat units lie at residues 119–166 (RNLF…DVCR), 167–211 (RKLY…DQLS), and 212–257 (DRIF…TNDA). A glycan (N-linked (GlcNAc...) asparagine) is linked at Asn-175. The N-linked (GlcNAc...) asparagine glycan is linked to Asn-316. EGF-like domains lie at 365–401 (DEKTAQLERDHCLNGGTYIADRVLCICPTGFKGSRCE) and 436–473 (EISKCSGLCLNGGHCKLEDISEKPSCECPHNFAGERCE). 5 disulfides stabilise this stretch: Cys-376–Cys-389, Cys-391–Cys-400, Cys-440–Cys-450, Cys-444–Cys-461, and Cys-463–Cys-472. Asn-475 is a glycosylation site (N-linked (GlcNAc...) asparagine). The chain crosses the membrane as a helical span at residues 535 to 555 (VIIVLVLGIVSCFFLVAVIVH). Residues 556 to 647 (GFRRLYKPKR…LIHNMDDDLY (92 aa)) are Cytoplasmic-facing.

Belongs to the cueball family.

It is found in the cell membrane. Has a role in spermatogenesis and oogenesis. This is Protein cueball from Drosophila pseudoobscura pseudoobscura (Fruit fly).